Here is a 173-residue protein sequence, read N- to C-terminus: Crossover junction endodeoxyribonuclease RuvC (173 aa).

Catalysis depends on residues D8, E69, and D141. The Mg(2+) site is built by D8, E69, and D141.

Belongs to the RuvC family. As to quaternary structure, homodimer which binds Holliday junction (HJ) DNA. The HJ becomes 2-fold symmetrical on binding to RuvC with unstacked arms; it has a different conformation from HJ DNA in complex with RuvA. In the full resolvosome a probable DNA-RuvA(4)-RuvB(12)-RuvC(2) complex forms which resolves the HJ. Requires Mg(2+) as cofactor.

The protein resides in the cytoplasm. It carries out the reaction Endonucleolytic cleavage at a junction such as a reciprocal single-stranded crossover between two homologous DNA duplexes (Holliday junction).. Its function is as follows. The RuvA-RuvB-RuvC complex processes Holliday junction (HJ) DNA during genetic recombination and DNA repair. Endonuclease that resolves HJ intermediates. Cleaves cruciform DNA by making single-stranded nicks across the HJ at symmetrical positions within the homologous arms, yielding a 5'-phosphate and a 3'-hydroxyl group; requires a central core of homology in the junction. The consensus cleavage sequence is 5'-(A/T)TT(C/G)-3'. Cleavage occurs on the 3'-side of the TT dinucleotide at the point of strand exchange. HJ branch migration catalyzed by RuvA-RuvB allows RuvC to scan DNA until it finds its consensus sequence, where it cleaves and resolves the cruciform DNA. This is Crossover junction endodeoxyribonuclease RuvC from Stenotrophomonas maltophilia (strain R551-3).